We begin with the raw amino-acid sequence, 826 residues long: MTSKKTTPMMKQWHQCKEKAGESLLLFRMGDFYEAFYDDAIVLSQNLDITLTQRQGIPMSGIPVSTINGYIDRLVSKGFKVAVAEQLDEAQDNKGKSEPLSRELQRFITPGTLLSSSLLPEKANNYIVSINRVGALFGLACLDFSTGSFLLQEYDNMKDLVDEICRLAPTEILSCDKFYKKHADIIEQIQQHLKLTLSTYADWAFEHQFATQKLSLHFHVSSLDGFGLKGLVPAINSAGALLSYLQDKLLLPVEHISIPKTQGNQKHLLIDTASQVNLELLTPIHDPQGKSSLLHVMERTSTPMGGRLLRNTLVNPFYDQKEILLRQDAVEFLLDRSELRKNLKSLLSQVRDLERLTTKITTSLAGPKDIGMLRDSLNASIRVCEVLSPLPLPKFFQGRFTLPIGLTSLSELLSRALLGELPLRISEGNIFCDNHHPDLQRLRYTKEHSKEWLWQYQETIRQQTGVKKLKVCYSQALGYYIEVSSDFAPLLPKEFIRRQSRLHAERFTTEKLQEFQDDMLNISDKLQTLETQLFKDLCAQILQQREEILSLSQVIADIDYILSLSDLAAEYNYCRPIVDTSDSLSISGGIHPVAQTLLDKGTFIPNDIKMHSTRTRMILITGPNMAGKSTYIRQIALLVIMAQMGSFIPAKSAHIGMIDKIFTRIGAGDNLSKGMSTFMVEMAETANILHNATDRSLVILDEVGRGTSTYDGLAIAQSVVEYLLFTEGKKAKTLFATHYKELTDLENHCPHVENFHASVKENGGQPVFLYEILKGHSQKSFGIHVAKLAGFPLCVISRAQQILRQLEGPEATSKQPQEKELQLTLF.

622–629 (GPNMAGKS) provides a ligand contact to ATP.

The protein belongs to the DNA mismatch repair MutS family.

This protein is involved in the repair of mismatches in DNA. It is possible that it carries out the mismatch recognition step. This protein has a weak ATPase activity. This chain is DNA mismatch repair protein MutS, found in Chlamydia abortus (strain DSM 27085 / S26/3) (Chlamydophila abortus).